The following is a 498-amino-acid chain: Transcription factor bHLH78 (498 aa).

Disordered stretches follow at residues Met-1–Gln-24 and Leu-207–Asp-297. Residues Asn-233–Lys-246 are compositionally biased toward polar residues. Positions Ser-259–Glu-270 are enriched in basic and acidic residues. Positions Glu-271–Gly-281 are enriched in acidic residues. Residues Gln-307–Leu-357 form the bHLH domain.

As to quaternary structure, homodimer. Binds reversibly to CRY2 after blue light illumination. In terms of tissue distribution, expressed constitutively in roots, leaves, stems, and flowers.

It is found in the nucleus. Functionally, transcription factor that binds DNA to G box 5'-CACGTG-3' and to E-box 5'-CANNTG-3'. Binds to chromatin DNA of the FT gene and promotes its expression, and thus triggers flowering in response to blue light. This Arabidopsis thaliana (Mouse-ear cress) protein is Transcription factor bHLH78 (BHLH78).